Consider the following 318-residue polypeptide: UDP-N-acetylenolpyruvoylglucosamine reductase (318 aa).

Residues 38 to 204 (IGGVCPVIVE…LGIEILLKEG (167 aa)) form the FAD-binding PCMH-type domain. Residue R182 is part of the active site. The span at 212–229 (SLKDKRDRRNSSQPENKK) shows a compositional bias: basic and acidic residues. The segment at 212–232 (SLKDKRDRRNSSQPENKKSAG) is disordered. The Proton donor role is filled by S233. The active site involves E310.

It belongs to the MurB family. FAD serves as cofactor.

It localises to the cytoplasm. The enzyme catalyses UDP-N-acetyl-alpha-D-muramate + NADP(+) = UDP-N-acetyl-3-O-(1-carboxyvinyl)-alpha-D-glucosamine + NADPH + H(+). The protein operates within cell wall biogenesis; peptidoglycan biosynthesis. Cell wall formation. The polypeptide is UDP-N-acetylenolpyruvoylglucosamine reductase (Leptospira interrogans serogroup Icterohaemorrhagiae serovar Lai (strain 56601)).